We begin with the raw amino-acid sequence, 141 residues long: HSECLTGDALGSLKCDCGEQLEFALQNISLLGGMIIYLRQEGRNIGLFNKVNAYALQDQGFDTIEANHQLGFKSDERSYEVVETILEHFKIDKIRLLTNNPKKMSCLKNIMIIERWPIIIPSNNHNVDYLKTKKEMMGHLL.

Residue 1–3 coordinates GTP; the sequence is HSE. Positions 4, 15, and 17 each coordinate Zn(2+). GTP contacts are provided by residues Q20, 41 to 43, and T63; that span reads EGR. The active-site Proton acceptor is D75. Catalysis depends on R77, which acts as the Nucleophile. The GTP site is built by T98 and K103.

It belongs to the GTP cyclohydrolase II family. Requires Zn(2+) as cofactor.

The enzyme catalyses GTP + 4 H2O = 2,5-diamino-6-hydroxy-4-(5-phosphoribosylamino)-pyrimidine + formate + 2 phosphate + 3 H(+). The protein operates within cofactor biosynthesis; riboflavin biosynthesis; 5-amino-6-(D-ribitylamino)uracil from GTP: step 1/4. Catalyzes the conversion of GTP to 2,5-diamino-6-ribosylamino-4(3H)-pyrimidinone 5'-phosphate (DARP), formate and pyrophosphate. In Sulfurospirillum multivorans (Dehalospirillum multivorans), this protein is GTP cyclohydrolase-2 (ribA).